Here is a 188-residue protein sequence, read N- to C-terminus: Peptidyl-tRNA hydrolase (188 aa).

Y15 contributes to the tRNA binding site. H20 (proton acceptor) is an active-site residue. TRNA is bound by residues F66, N68, and N114.

It belongs to the PTH family. In terms of assembly, monomer.

It is found in the cytoplasm. The enzyme catalyses an N-acyl-L-alpha-aminoacyl-tRNA + H2O = an N-acyl-L-amino acid + a tRNA + H(+). In terms of biological role, hydrolyzes ribosome-free peptidyl-tRNAs (with 1 or more amino acids incorporated), which drop off the ribosome during protein synthesis, or as a result of ribosome stalling. Its function is as follows. Catalyzes the release of premature peptidyl moieties from peptidyl-tRNA molecules trapped in stalled 50S ribosomal subunits, and thus maintains levels of free tRNAs and 50S ribosomes. This chain is Peptidyl-tRNA hydrolase, found in Lactococcus lactis subsp. lactis (strain IL1403) (Streptococcus lactis).